A 552-amino-acid chain; its full sequence is Putative transport protein APL_0966 (552 aa).

5 helical membrane passes run 4-24 (IAII…IGHI), 29-49 (VGLG…CTHL), 65-85 (FGLI…FFAS), 95-115 (GFAV…HKLF), and 161-181 (IAYP…RIIF). 2 consecutive RCK C-terminal domains span residues 190–275 (QEFD…ILGE) and 277–360 (ADVS…IIGD). The next 6 helical transmembrane spans lie at 370 to 390 (MLPI…PLYI), 402 to 424 (AGGP…LYWF), 438 to 458 (IVLF…DTLL), 463 to 483 (LAWM…TGFV), 492 to 512 (YLSL…LAFA), and 529 to 549 (VYPL…ILLW).

This sequence belongs to the AAE transporter (TC 2.A.81) family. YidE subfamily.

Its subcellular location is the cell membrane. The chain is Putative transport protein APL_0966 from Actinobacillus pleuropneumoniae serotype 5b (strain L20).